Consider the following 141-residue polypeptide: Hemoglobin subunit alpha (141 aa).

The Globin domain occupies 1–141 (VLSEEDKSHV…VSAMLTSKYR (141 aa)). His-58 is an O2 binding site. His-87 serves as a coordination point for heme b.

Belongs to the globin family. As to quaternary structure, heterotetramer of two alpha chains and two beta chains. In terms of tissue distribution, red blood cells.

Its function is as follows. Involved in oxygen transport from the lung to the various peripheral tissues. In Caiman crocodilus (Spectacled caiman), this protein is Hemoglobin subunit alpha (HBA).